Here is a 164-residue protein sequence, read N- to C-terminus: RNA pyrophosphohydrolase (164 aa).

Residues 8-153 (PYRSNVGAAL…KRPIYERLAR (146 aa)) form the Nudix hydrolase domain. The Nudix box signature appears at 45–66 (GGIDGDEDPAAAVLRELDEEIG).

It belongs to the Nudix hydrolase family. RppH subfamily. It depends on a divalent metal cation as a cofactor.

Accelerates the degradation of transcripts by removing pyrophosphate from the 5'-end of triphosphorylated RNA, leading to a more labile monophosphorylated state that can stimulate subsequent ribonuclease cleavage. This is RNA pyrophosphohydrolase from Acidiphilium cryptum (strain JF-5).